The following is a 588-amino-acid chain: Aspartate--tRNA ligase (588 aa).

Glutamate 177 is an L-aspartate binding site. Residues 201-204 form an aspartate region; that stretch reads QLFK. Arginine 223 is an L-aspartate binding site. Residues 223 to 225 and glutamine 232 contribute to the ATP site; that span reads RDE. Histidine 451 contributes to the L-aspartate binding site. Position 485 (glutamate 485) interacts with ATP. Arginine 492 is an L-aspartate binding site. 537–540 is an ATP binding site; it reads GLDR.

The protein belongs to the class-II aminoacyl-tRNA synthetase family. Type 1 subfamily. Homodimer.

The protein localises to the cytoplasm. It carries out the reaction tRNA(Asp) + L-aspartate + ATP = L-aspartyl-tRNA(Asp) + AMP + diphosphate. Catalyzes the attachment of L-aspartate to tRNA(Asp) in a two-step reaction: L-aspartate is first activated by ATP to form Asp-AMP and then transferred to the acceptor end of tRNA(Asp). The polypeptide is Aspartate--tRNA ligase (Staphylococcus aureus (strain NCTC 8325 / PS 47)).